A 358-amino-acid chain; its full sequence is MAAALVRRFCRGSSFPVSGHGYRMLSTVENVSESGKSMNLYSAINQALHIALETDPRSYVFGEDVGFGGVFRCTTGLAERFGKSRVFNTPLCEQGIVGFGIGLAAMGNRVIAEIQFADYIFPAFDQIVNEAAKFRYRSGNQFNCGGLTIRAPYGAVGHGGHYHSQSPEAFFCHVPGIKVVIPRSPREAKGLLLSSIRDPNPVVFFEPKWLYRQAVEDVPEDDYMIPLSEAEVMREGSDITLVGWGAQLTIMEQACLDAENEGISCELIDLKTLIPWDKEIVETSVRKTGRLLISHEAPVTGGFGAEIAATIVERCFLRLEAPVSRVCGLDTPFPLVFEPFYMPTKNKILDAIRSTVNY.

A mitochondrion-targeting transit peptide spans 1–16; it reads MAAALVRRFCRGSSFP. Position 119 (tyrosine 119) interacts with thiamine diphosphate. Residues glycine 145, leucine 147, threonine 148, aspartate 198, and asparagine 200 each coordinate K(+).

Heterotetramer of alpha and beta chains. Thiamine diphosphate serves as cofactor. Expressed in the non-photosynthetic organs such as siliques, flowers and roots.

It localises to the mitochondrion matrix. It carries out the reaction N(6)-[(R)-lipoyl]-L-lysyl-[protein] + 3-methyl-2-oxobutanoate + H(+) = N(6)-[(R)-S(8)-2-methylpropanoyldihydrolipoyl]-L-lysyl-[protein] + CO2. In terms of biological role, the branched-chain alpha-keto dehydrogenase complex catalyzes the overall conversion of alpha-keto acids to acyl-CoA and CO(2). It contains multiple copies of three enzymatic components: branched-chain alpha-keto acid decarboxylase (E1), lipoamide acyltransferase (E2) and lipoamide dehydrogenase (E3). Required during sugar starvation and acts under the control of a sugar-sensing mechanism involving Ser/Thr kinases and phosphatases. The polypeptide is 2-oxoisovalerate dehydrogenase subunit beta 2, mitochondrial (DIN4) (Arabidopsis thaliana (Mouse-ear cress)).